We begin with the raw amino-acid sequence, 247 residues long: 1-(5-phosphoribosyl)-5-[(5-phosphoribosylamino)methylideneamino] imidazole-4-carboxamide isomerase (247 aa).

D8 (proton acceptor) is an active-site residue. The Proton donor role is filled by D129.

Belongs to the HisA/HisF family.

It localises to the cytoplasm. The enzyme catalyses 1-(5-phospho-beta-D-ribosyl)-5-[(5-phospho-beta-D-ribosylamino)methylideneamino]imidazole-4-carboxamide = 5-[(5-phospho-1-deoxy-D-ribulos-1-ylimino)methylamino]-1-(5-phospho-beta-D-ribosyl)imidazole-4-carboxamide. The protein operates within amino-acid biosynthesis; L-histidine biosynthesis; L-histidine from 5-phospho-alpha-D-ribose 1-diphosphate: step 4/9. The protein is 1-(5-phosphoribosyl)-5-[(5-phosphoribosylamino)methylideneamino] imidazole-4-carboxamide isomerase of Solidesulfovibrio magneticus (strain ATCC 700980 / DSM 13731 / RS-1) (Desulfovibrio magneticus).